Consider the following 875-residue polypeptide: MKASEIRSAFLKFFESKGHQIVASSPVVPGDDPTLLFTNAGMNQFKDVFLGFDKRPYSRATTAQKCIRAGGKHNDLENVGYTARHHTFFEMLGNFSFGDYFKQDAIAYAWELLTEVFKLPKDKLWVTVYAEDDEAYEIWNKQVGVPAERIVRIGDNKGARYASDNFWMMGDTGPCGPCTEIFYDHGPEIPGGPPGSPDEDGDRYIEIWNNVFMQFNRDEAGVMHKLPKPSVDTGMGLERITAVLQHVHSNYEIDLFVALLAAAKQAVDAAGAGDSDKDSPSLKVIADHIRACSFTIVDGVIPGNEGRGYVLRRIARRGIRHGYKLGARKPFFHTLVAELVRQMGEAYPELARAEARVTEVLKQEEERFFQTIANGMEILESALAGGAKTLDGETAFKLHDTYGFPLDLTADVCRERGVTVDQAGFDAAMKRQREQARAAGKFKMAAGLEYAGAATTFHGYEHLVHEGSKVTAVYVDGSAVPSAKAGDDAVIVLDHTPFYAESGGQVGDGGELRNGTSRVIVEDTQKIQADVFGHHGRVVEGEIRVGDVLNARVDGEQRARTVRNHSVTHLMHKALREVLGGHVQQKGSLVNAERTRFDFAHNAPMSDAQIAKVEAIVNAEILANAPTQARVLPMEEAQKLGAMMLFGEKYGDEVRVLDIGSSRELCGGTHVQRTGDIGLFKVVAESGVAAGIRRVEAITGDNALAYVQQLEGTVAGLAGALKAAPAEVPGRVAAVLEQLRTLEKELAALKGKLASSQGDGLLAQAVDVKGLKVLAARLEGADAKALRDTLDQLKNKLKSAAIVLAVVEGGKVQLAAGVTADATARVKAGELVNFVAQQVGGKGGGKPDLAMAGGTDPAGLGAALASVAGWVGERA.

His-565, His-569, Cys-666, and His-670 together coordinate Zn(2+).

Belongs to the class-II aminoacyl-tRNA synthetase family. The cofactor is Zn(2+).

Its subcellular location is the cytoplasm. The catalysed reaction is tRNA(Ala) + L-alanine + ATP = L-alanyl-tRNA(Ala) + AMP + diphosphate. Its function is as follows. Catalyzes the attachment of alanine to tRNA(Ala) in a two-step reaction: alanine is first activated by ATP to form Ala-AMP and then transferred to the acceptor end of tRNA(Ala). Also edits incorrectly charged Ser-tRNA(Ala) and Gly-tRNA(Ala) via its editing domain. The sequence is that of Alanine--tRNA ligase from Methylibium petroleiphilum (strain ATCC BAA-1232 / LMG 22953 / PM1).